We begin with the raw amino-acid sequence, 558 residues long: V-set and immunoglobulin domain-containing protein 10 (558 aa).

A signal peptide spans 1 to 20 (MAGLRVLLCLGALLARQGSA). Residues 21-426 (GLQLLLNPSR…IWLSVKEPLN (406 aa)) lie on the Extracellular side of the membrane. 6 N-linked (GlcNAc...) asparagine glycosylation sites follow: N32, N60, N121, N150, N159, and N218. 4 consecutive Ig-like C2-type domains span residues 37-140 (PNSE…RLRV), 144-235 (PAYV…RKVT), 248-327 (PQCS…VKLS), and 332-420 (PSQP…IWLS). A disulfide bridge links C65 with C124. 2 disulfides stabilise this stretch: C174/C221 and C265/C308. N-linked (GlcNAc...) asparagine glycosylation is present at N344. C349 and C404 are joined by a disulfide. A helical membrane pass occupies residues 427–447 (IGGIVGTVVSLLLLGLAVVSG). The Cytoplasmic segment spans residues 448–558 (LTLYYSPAFW…GIVQEDGKPV (111 aa)). Residues 477–506 (DSEEEEEEEEEEEEKEDVAEEVEQETNETE) show a composition bias toward acidic residues. 2 disordered regions span residues 477–515 (DSEEEEEEEEEEEEKEDVAEEVEQETNETEELPKGISKH) and 532–558 (MGNGFQEFQDDSDGQQSGIVQEDGKPV).

The protein localises to the membrane. This chain is V-set and immunoglobulin domain-containing protein 10 (Vsig10), found in Mus musculus (Mouse).